The chain runs to 357 residues: Putative RING-H2 finger protein ATL37 (357 aa).

The first 31 residues, 1–31 (MTIFTRDFSHRILACVLLPLFLFQCLPYVTC), serve as a signal peptide directing secretion. The helical transmembrane segment at 47–67 (SSIIGIVLLSLFLLLLVVYCL) threads the bilayer. An RING-type; atypical zinc finger spans residues 120 to 162 (CAICLCEFEDEEPLRWMPPCSHTFHANCIDEWLSSRSTCPVCR). A disordered region spans residues 172 to 210 (SFPHPSMDVETGNAQRGVQESPDERSLTGSSVTCNNNAN). Polar residues predominate over residues 198-210 (LTGSSVTCNNNAN). At Ser-273 the chain carries Phosphoserine. Disordered regions lie at residues 281-304 (RSSRQGYRSGSVGNERTGFSQGRQ) and 327-357 (LDRDNLMRETSQANDKDFGERSFQRLMPEKN). Residues 283–304 (SRQGYRSGSVGNERTGFSQGRQ) show a composition bias toward polar residues. Residues 340–357 (NDKDFGERSFQRLMPEKN) are compositionally biased toward basic and acidic residues.

This sequence belongs to the RING-type zinc finger family. ATL subfamily.

The protein resides in the membrane. It carries out the reaction S-ubiquitinyl-[E2 ubiquitin-conjugating enzyme]-L-cysteine + [acceptor protein]-L-lysine = [E2 ubiquitin-conjugating enzyme]-L-cysteine + N(6)-ubiquitinyl-[acceptor protein]-L-lysine.. It participates in protein modification; protein ubiquitination. The chain is Putative RING-H2 finger protein ATL37 (ATL37) from Arabidopsis thaliana (Mouse-ear cress).